The following is a 218-amino-acid chain: 3,4-dihydroxy-2-butanone 4-phosphate synthase (218 aa).

D-ribulose 5-phosphate contacts are provided by residues 38–39 (RE), Asp43, 151–155 (RRGHT), and Glu175. Glu39 contacts Mg(2+). His154 is a Mg(2+) binding site.

The protein belongs to the DHBP synthase family. As to quaternary structure, homodimer. Mg(2+) is required as a cofactor. Requires Mn(2+) as cofactor.

It carries out the reaction D-ribulose 5-phosphate = (2S)-2-hydroxy-3-oxobutyl phosphate + formate + H(+). It functions in the pathway cofactor biosynthesis; riboflavin biosynthesis; 2-hydroxy-3-oxobutyl phosphate from D-ribulose 5-phosphate: step 1/1. Its function is as follows. Catalyzes the conversion of D-ribulose 5-phosphate to formate and 3,4-dihydroxy-2-butanone 4-phosphate. This chain is 3,4-dihydroxy-2-butanone 4-phosphate synthase, found in Vibrio cholerae serotype O1 (strain M66-2).